We begin with the raw amino-acid sequence, 290 residues long: Ribosomal RNA small subunit methyltransferase A (290 aa).

Positions 27, 29, 54, 75, 100, and 125 each coordinate S-adenosyl-L-methionine.

The protein belongs to the class I-like SAM-binding methyltransferase superfamily. rRNA adenine N(6)-methyltransferase family. RsmA subfamily.

Its subcellular location is the cytoplasm. It carries out the reaction adenosine(1518)/adenosine(1519) in 16S rRNA + 4 S-adenosyl-L-methionine = N(6)-dimethyladenosine(1518)/N(6)-dimethyladenosine(1519) in 16S rRNA + 4 S-adenosyl-L-homocysteine + 4 H(+). Specifically dimethylates two adjacent adenosines (A1518 and A1519) in the loop of a conserved hairpin near the 3'-end of 16S rRNA in the 30S particle. May play a critical role in biogenesis of 30S subunits. The chain is Ribosomal RNA small subunit methyltransferase A from Streptococcus pyogenes serotype M3 (strain ATCC BAA-595 / MGAS315).